The chain runs to 444 residues: ATPase PAAT (444 aa).

3 positions are modified to phosphoserine: S177, S182, and S254. The interval 279–300 is disordered; sequence SAQPSGEGNTTNHDEGHLMPQN. A compositionally biased stretch (polar residues) spans 280–289; sequence AQPSGEGNTT. S302 carries the phosphoserine modification. A disordered region spans residues 424–444; sequence PPPGMPLRHYDSRERLSNGER. The segment covering 431–444 has biased composition (basic and acidic residues); that stretch reads RHYDSRERLSNGER.

As to quaternary structure, homodimer. Interacts with ABCB7, ABCB8/MITOSUR and ABCB10.

It localises to the cytoplasm. Its subcellular location is the mitochondrion. It catalyses the reaction ATP + H2O = ADP + phosphate + H(+). Its function is as follows. ATPase that regulates mitochondrial ABC transporters ABCB7, ABCB8/MITOSUR and ABCB10. Regulates mitochondrial ferric concentration and heme biosynthesis and plays a role in the maintenance of mitochondrial homeostasis and cell survival. This chain is ATPase PAAT, found in Mus musculus (Mouse).